The sequence spans 298 residues: tRNA pseudouridine synthase B (298 aa).

The active-site Nucleophile is Asp39.

It belongs to the pseudouridine synthase TruB family. Type 1 subfamily.

The enzyme catalyses uridine(55) in tRNA = pseudouridine(55) in tRNA. Functionally, responsible for synthesis of pseudouridine from uracil-55 in the psi GC loop of transfer RNAs. This Lactobacillus delbrueckii subsp. bulgaricus (strain ATCC BAA-365 / Lb-18) protein is tRNA pseudouridine synthase B.